A 369-amino-acid chain; its full sequence is Protein-glutamate methylesterase/protein-glutamine glutaminase of group 3 operon (369 aa).

The Response regulatory domain maps to 11–128; it reads RVLIVDDSAA…DLERQEASIR (118 aa). Asp-62 bears the 4-aspartylphosphate mark. The segment at 136–168 is disordered; that stretch reads ATETTRRRSQPEPRPLAPGPKLTADEILPARPP. Residues 170–358 form the CheB-type methylesterase domain; that stretch reads PVPETMPVVC…LDRLAARIME (189 aa). Catalysis depends on residues Ser-183, His-209, and Asp-305.

Belongs to the CheB family. Post-translationally, phosphorylated in vitro by CheA2, but not by CheA1. Phosphorylation of the N-terminal regulatory domain activates the methylesterase activity.

The protein localises to the cytoplasm. It catalyses the reaction [protein]-L-glutamate 5-O-methyl ester + H2O = L-glutamyl-[protein] + methanol + H(+). It carries out the reaction L-glutaminyl-[protein] + H2O = L-glutamyl-[protein] + NH4(+). Its function is as follows. Involved in chemotaxis. Part of a chemotaxis signal transduction system that modulates chemotaxis in response to various stimuli. Catalyzes the demethylation of specific methylglutamate residues introduced into the chemoreceptors (methyl-accepting chemotaxis proteins or MCP) by CheR. Also mediates the irreversible deamidation of specific glutamine residues to glutamic acid. This chain is Protein-glutamate methylesterase/protein-glutamine glutaminase of group 3 operon (cheB3), found in Cereibacter sphaeroides (Rhodobacter sphaeroides).